The sequence spans 109 residues: Phosphoribosyl-AMP cyclohydrolase (109 aa).

Residue D76 participates in Mg(2+) binding. C77 is a Zn(2+) binding site. The Mg(2+) site is built by D78 and D80. The Zn(2+) site is built by C93 and C100.

Belongs to the PRA-CH family. Homodimer. The cofactor is Mg(2+). Zn(2+) serves as cofactor.

It localises to the cytoplasm. The catalysed reaction is 1-(5-phospho-beta-D-ribosyl)-5'-AMP + H2O = 1-(5-phospho-beta-D-ribosyl)-5-[(5-phospho-beta-D-ribosylamino)methylideneamino]imidazole-4-carboxamide. The protein operates within amino-acid biosynthesis; L-histidine biosynthesis; L-histidine from 5-phospho-alpha-D-ribose 1-diphosphate: step 3/9. In terms of biological role, catalyzes the hydrolysis of the adenine ring of phosphoribosyl-AMP. This chain is Phosphoribosyl-AMP cyclohydrolase, found in Streptococcus mutans serotype c (strain ATCC 700610 / UA159).